Here is a 390-residue protein sequence, read N- to C-terminus: 3-ketosteroid-9-alpha-monooxygenase, oxygenase component (390 aa).

The 103-residue stretch at 32–134 (WHCLGLLRDF…TLERNGQLYV (103 aa)) folds into the Rieske domain. Cys-73, His-75, Cys-92, and His-95 together coordinate [2Fe-2S] cluster. 4 residues coordinate Fe cation: Asn-181, His-187, His-192, and Asp-311.

Homotrimer. The two-component system 3-ketosteroid-9-alpha-monooxygenase is composed of an oxygenase component KshA and a reductase component KshB. Requires [2Fe-2S] cluster as cofactor. The cofactor is Fe cation.

It catalyses the reaction androsta-1,4-diene-3,17-dione + 2 reduced [2Fe-2S]-[ferredoxin] + O2 + 2 H(+) = 9alpha-hydroxyandrosta-1,4-diene-3,17-dione + 2 oxidized [2Fe-2S]-[ferredoxin] + H2O. It participates in steroid metabolism; cholesterol degradation. In terms of biological role, probably involved in the degradation of cholesterol. In vitro, catalyzes the introduction of a 9alpha-hydroxyl moiety into the ring B of 3-ketosteroid substrates such as 1,4-androstadiene-3,17-dione (ADD), 4-androstene-3,17-dione (AD), 4-androstene-17beta-ol-3-one (testosterone), 4-pregnene-3,20-dione (progesterone), 19-nor-4-androstene-3,17-dione, 1-(5alpha)-androstene-3,17-dione, 5alpha-androstane-3,17-dione, 5beta-androstane-3,17-dione, 5alpha-androstane-17beta-ol-3-one (stanolon), 11beta-hydrocortisone, 3-oxo-23,24-bisnorcholesta-4-en-22-oate (4-BNC), 23,24-bisnorcholesta-4-ene-22-oate, 3-oxo-23,24-bisnorcholesta-1,4-dien-22-oate (1,4-BNC) and 3-oxo-23,24-bisnorcholesta-1,4-dien-22-oyl-coenzyme A thioester (1,4-BNC-CoA). KshA5 has the broadest substrate range without a clear substrate preference and is active with Delta-4, Delta-1,4, 5alpha-H and 5beta-H steroids, as well as with steroids having bulky aliphatic side chains and an isopropionyl side chain at C17. This is 3-ketosteroid-9-alpha-monooxygenase, oxygenase component from Rhodococcus rhodochrous.